A 493-amino-acid chain; its full sequence is 3-octaprenyl-4-hydroxybenzoate carboxy-lyase (493 aa).

Residue asparagine 172 participates in Mn(2+) binding. Residues 175 to 177 (IYR), 189 to 191 (RWL), and 194 to 195 (RG) each bind prenylated FMN. Position 238 (glutamate 238) interacts with Mn(2+). Aspartate 287 (proton donor) is an active-site residue.

It belongs to the UbiD family. In terms of assembly, homohexamer. Prenylated FMN serves as cofactor. It depends on Mn(2+) as a cofactor.

It is found in the cell membrane. The enzyme catalyses a 4-hydroxy-3-(all-trans-polyprenyl)benzoate + H(+) = a 2-(all-trans-polyprenyl)phenol + CO2. Its pathway is cofactor biosynthesis; ubiquinone biosynthesis. Catalyzes the decarboxylation of 3-octaprenyl-4-hydroxy benzoate to 2-octaprenylphenol, an intermediate step in ubiquinone biosynthesis. The protein is 3-octaprenyl-4-hydroxybenzoate carboxy-lyase of Shewanella amazonensis (strain ATCC BAA-1098 / SB2B).